The following is a 249-amino-acid chain: 2,3-bisphosphoglycerate-dependent phosphoglycerate mutase (249 aa).

Substrate is bound by residues 11 to 18 (RHGESEWN), 24 to 25 (TG), Arg-63, 90 to 93 (ERHY), Lys-101, and 117 to 118 (RR). His-12 functions as the Tele-phosphohistidine intermediate in the catalytic mechanism. Glu-90 acts as the Proton donor/acceptor in catalysis. A disordered region spans residues 119-138 (SYDTPPPPIERGSTYSQDAD). Position 184 to 185 (184 to 185 (GN)) interacts with substrate.

The protein belongs to the phosphoglycerate mutase family. BPG-dependent PGAM subfamily.

It catalyses the reaction (2R)-2-phosphoglycerate = (2R)-3-phosphoglycerate. Its pathway is carbohydrate degradation; glycolysis; pyruvate from D-glyceraldehyde 3-phosphate: step 3/5. Its function is as follows. Catalyzes the interconversion of 2-phosphoglycerate and 3-phosphoglycerate. This is 2,3-bisphosphoglycerate-dependent phosphoglycerate mutase from Mycolicibacterium paratuberculosis (strain ATCC BAA-968 / K-10) (Mycobacterium paratuberculosis).